We begin with the raw amino-acid sequence, 425 residues long: Orexin/Hypocretin receptor type 1 (425 aa).

The Extracellular segment spans residues 1–46 (MEPSATPGPQMGVPTGVGDPSLVPPDYEEEFLSYLWRDYLYPKQYE). Residues 26 to 41 (DYEEEFLSYLWRDYLY) form a required for response to orexin-A region. The chain crosses the membrane as a helical span at residues 47–67 (WVLIAAYVAVFLVALVGNTLV). Topologically, residues 68–82 (CLAVWRNHHMRTVTN) are cytoplasmic. Residues 83–105 (YFIVNLSLADVLVTAICLPASLL) form a helical membrane-spanning segment. Topologically, residues 106-119 (VDITESWLFGHALC) are extracellular. Residues C119 and C202 are joined by a disulfide bond. Residues 120 to 140 (KVIPYLQAVSVSVAVLTLSFI) form a helical membrane-spanning segment. Residues 141–160 (ALDRWYAIYHPLLFKSTARR) lie on the Cytoplasmic side of the membrane. The chain crosses the membrane as a helical span at residues 161-182 (ARGSILGIWAVSPAVMVPQAAV). Residues 183-213 (MECSSVLPELANRTRLFSVCDERWADDLYPK) lie on the Extracellular side of the membrane. A helical membrane pass occupies residues 214-235 (IYHSCFFIVTYLAPLGLMAMAY). At 236–298 (FQIFRKLWGR…QMRARRKTAK (63 aa)) the chain is on the cytoplasmic side. The helical transmembrane segment at 299-321 (MLMVVLLVFALCYLPISVLNVLK) threads the bilayer. Residues 322-336 (RVFGMFRQTSDREAV) are Extracellular-facing. The chain crosses the membrane as a helical span at residues 337-360 (YACFTFSHWLVYANSAANPIIYNF). The Cytoplasmic portion of the chain corresponds to 361 to 425 (LSGKFREQFK…VLTSVTTVLP (65 aa)).

The protein belongs to the G-protein coupled receptor 1 family.

The protein resides in the cell membrane. Moderately selective excitatory receptor for orexin-A and, with a lower affinity, for orexin-B neuropeptide. Triggers an increase in cytoplasmic Ca(2+) levels in response to orexin-A binding. This chain is Orexin/Hypocretin receptor type 1, found in Sus scrofa (Pig).